A 296-amino-acid polypeptide reads, in one-letter code: Cytidine deaminase (296 aa).

CMP/dCMP-type deaminase domains lie at 47 to 167 and 186 to 296; these read ELNE…FGPS and DSND…VEPE. 88 to 90 serves as a coordination point for substrate; sequence NIE. Position 101 (histidine 101) interacts with Zn(2+). Catalysis depends on glutamate 103, which acts as the Proton donor. Positions 128 and 131 each coordinate Zn(2+).

It belongs to the cytidine and deoxycytidylate deaminase family. In terms of assembly, homodimer. Requires Zn(2+) as cofactor.

The enzyme catalyses cytidine + H2O + H(+) = uridine + NH4(+). It catalyses the reaction 2'-deoxycytidine + H2O + H(+) = 2'-deoxyuridine + NH4(+). Its function is as follows. This enzyme scavenges exogenous and endogenous cytidine and 2'-deoxycytidine for UMP synthesis. In Shewanella pealeana (strain ATCC 700345 / ANG-SQ1), this protein is Cytidine deaminase.